A 262-amino-acid chain; its full sequence is Acyl-[acyl-carrier-protein]--UDP-N-acetylglucosamine O-acyltransferase (262 aa).

It belongs to the transferase hexapeptide repeat family. LpxA subfamily. Homotrimer.

Its subcellular location is the cytoplasm. The catalysed reaction is a (3R)-hydroxyacyl-[ACP] + UDP-N-acetyl-alpha-D-glucosamine = a UDP-3-O-[(3R)-3-hydroxyacyl]-N-acetyl-alpha-D-glucosamine + holo-[ACP]. It participates in glycolipid biosynthesis; lipid IV(A) biosynthesis; lipid IV(A) from (3R)-3-hydroxytetradecanoyl-[acyl-carrier-protein] and UDP-N-acetyl-alpha-D-glucosamine: step 1/6. Functionally, involved in the biosynthesis of lipid A, a phosphorylated glycolipid that anchors the lipopolysaccharide to the outer membrane of the cell. The sequence is that of Acyl-[acyl-carrier-protein]--UDP-N-acetylglucosamine O-acyltransferase from Wigglesworthia glossinidia brevipalpis.